A 270-amino-acid chain; its full sequence is Urease accessory protein UreD (270 aa).

Belongs to the UreD family. UreD, UreF and UreG form a complex that acts as a GTP-hydrolysis-dependent molecular chaperone, activating the urease apoprotein by helping to assemble the nickel containing metallocenter of UreC. The UreE protein probably delivers the nickel.

It localises to the cytoplasm. Required for maturation of urease via the functional incorporation of the urease nickel metallocenter. The sequence is that of Urease accessory protein UreD from Beijerinckia indica subsp. indica (strain ATCC 9039 / DSM 1715 / NCIMB 8712).